A 422-amino-acid chain; its full sequence is UDP-N-acetylglucosamine 1-carboxyvinyltransferase (422 aa).

Lys-22–Asn-23 contacts phosphoenolpyruvate. Arg-93 is a UDP-N-acetyl-alpha-D-glucosamine binding site. The Proton donor role is filled by Cys-117. Cys-117 is subject to 2-(S-cysteinyl)pyruvic acid O-phosphothioketal. UDP-N-acetyl-alpha-D-glucosamine is bound by residues Arg-122 to Leu-126, Asp-308, and Leu-330.

This sequence belongs to the EPSP synthase family. MurA subfamily.

The protein localises to the cytoplasm. The enzyme catalyses phosphoenolpyruvate + UDP-N-acetyl-alpha-D-glucosamine = UDP-N-acetyl-3-O-(1-carboxyvinyl)-alpha-D-glucosamine + phosphate. Its pathway is cell wall biogenesis; peptidoglycan biosynthesis. Its function is as follows. Cell wall formation. Adds enolpyruvyl to UDP-N-acetylglucosamine. The protein is UDP-N-acetylglucosamine 1-carboxyvinyltransferase of Helicobacter pylori (strain Shi470).